A 315-amino-acid chain; its full sequence is Glutaminase (315 aa).

Residues Ser70, Asn120, Glu166, Asn173, Tyr197, Tyr249, and Val267 each contribute to the substrate site.

Belongs to the glutaminase family. As to quaternary structure, homotetramer.

The enzyme catalyses L-glutamine + H2O = L-glutamate + NH4(+). This Rhizobium meliloti (strain 1021) (Ensifer meliloti) protein is Glutaminase.